A 99-amino-acid chain; its full sequence is Accessory protein p12I (99 aa).

Residues 3 to 23 form a helical membrane-spanning segment; it reads FRLLSPLSPLALTALLLFLLP. 2 short sequence motifs (SH3-binding) span residues 4 to 11 and 33 to 38; these read RLLSPLSP and RPPPAP. A helical membrane pass occupies residues 48-68; the sequence is ILSGLLFLLFLPLFFSLPLLL. 2 consecutive short sequence motifs (SH3-binding) follow at residues 70–77 and 88–93; these read PSLPITMR and KAPSQP. K88 is covalently cross-linked (Glycyl lysine isopeptide (Lys-Gly) (interchain with G-Cter in ubiquitin); in isolate LAF).

The protein belongs to the HTLV-1 accessory protein p12I family. In terms of assembly, p12I is a homodimer. Interacts with human CANX, CALR, ATP6V0C, IL2RB, IL2RG. Binds to MHC-I heavy chains HLA-A2, HLA-B7 and HLA-Cw4. Post-translationally, ubiquitinated; a fraction of P12I is degraded via the ubiquitin system.

It localises to the host endoplasmic reticulum membrane. The protein localises to the host Golgi apparatus. Its subcellular location is the host cis-Golgi network membrane. Functionally, p12I is a modulator of T-lymphocyte proliferation and immune function and may contribute to establish a persistent infection. Binds and down-modulates cell surface expression of interleukin-2 receptors IL2RB and IL2RG. Also down-modulates cell surface MHC-I molecules by binding to free immature MHC-I heavy chains in the ER and targeting them to the proteasome for degradation. Binding to IL2RB mediates recruitment of JAK1 and JAK3. As a result of this interaction, p12I increases DNA-binding and transcriptional activity of STAT5. This Homo sapiens (Human) protein is Accessory protein p12I.